Consider the following 100-residue polypeptide: Transcription and mRNA export factor SUS1 (100 aa).

Belongs to the ENY2 family. As to quaternary structure, component of the nuclear pore complex (NPC)-associated TREX-2 complex (transcription and export complex 2), composed of at least SUS1, SAC3, THP1, SEM1, and CDC31. TREX-2 contains 2 SUS1 chains. The TREX-2 complex interacts with the nucleoporin NUP1. Component of the 1.8 MDa SAGA transcription coactivator-HAT complex. SAGA is built of 5 distinct domains with specialized functions. Within the SAGA complex, SUS1, SGF11, SGF73 and UBP8 form an additional subcomplex of SAGA called the DUB module (deubiquitination module). Interacts directly with THP1, SAC3, SGF11, and with the RNA polymerase II.

Its subcellular location is the nucleus. The protein resides in the nucleoplasm. The protein localises to the cytoplasm. It is found in the P-body. Involved in mRNA export coupled transcription activation by association with both the TREX-2 and the SAGA complexes. At the promoters, SAGA is required for recruitment of the basal transcription machinery. It influences RNA polymerase II transcriptional activity through different activities such as TBP interaction and promoter selectivity, interaction with transcription activators, and chromatin modification through histone acetylation and deubiquitination. Within the SAGA complex, participates in a subcomplex required for deubiquitination of H2B and for the maintenance of steady-state H3 methylation levels. The TREX-2 complex functions in docking export-competent ribonucleoprotein particles (mRNPs) to the nuclear entrance of the nuclear pore complex (nuclear basket). TREX-2 participates in mRNA export and accurate chromatin positioning in the nucleus by tethering genes to the nuclear periphery. May also be involved in cytoplasmic mRNA decay by interaction with components of P-bodies. This is Transcription and mRNA export factor SUS1 from Cryptococcus neoformans var. neoformans serotype D (strain B-3501A) (Filobasidiella neoformans).